Here is a 1433-residue protein sequence, read N- to C-terminus: DNA polymerase III PolC-type (1433 aa).

In terms of domain architecture, Exonuclease spans 419–575; the sequence is FVVFDVETTG…YDAEATGHLL (157 aa).

The protein belongs to the DNA polymerase type-C family. PolC subfamily.

It is found in the cytoplasm. It catalyses the reaction DNA(n) + a 2'-deoxyribonucleoside 5'-triphosphate = DNA(n+1) + diphosphate. Functionally, required for replicative DNA synthesis. This DNA polymerase also exhibits 3' to 5' exonuclease activity. The polypeptide is DNA polymerase III PolC-type (Halalkalibacterium halodurans (strain ATCC BAA-125 / DSM 18197 / FERM 7344 / JCM 9153 / C-125) (Bacillus halodurans)).